Here is a 460-residue protein sequence, read N- to C-terminus: A-type ATP synthase subunit B (460 aa).

Belongs to the ATPase alpha/beta chains family. Has multiple subunits, A(3), B(3), C, D, E, F, G, I and K(x); there may be a few other subunits as well.

It is found in the cell membrane. Component of the A-type ATP synthase that produces ATP from ADP in the presence of a proton gradient across the membrane. The B chain is a regulatory subunit. In Methanosarcina mazei (strain ATCC BAA-159 / DSM 3647 / Goe1 / Go1 / JCM 11833 / OCM 88) (Methanosarcina frisia), this protein is A-type ATP synthase subunit B.